Consider the following 99-residue polypeptide: Sperm protein associated with the nucleus on the X chromosome N4 (99 aa).

Polar residues predominate over residues 1 to 10; it reads MEEPTSSTNE. Residues 1–99 are disordered; that stretch reads MEEPTSSTNE…AGSPQDGGQN (99 aa). Basic and acidic residues predominate over residues 11–22; sequence NKMKSPCESNKR. Positions 23–32 are enriched in basic residues; sequence KVDKKKKNLH. Over residues 64 to 78 the composition is skewed to polar residues; it reads SNQLENNQPTESSTD.

The protein belongs to the SPAN-X family.

In Homo sapiens (Human), this protein is Sperm protein associated with the nucleus on the X chromosome N4 (SPANXN4).